The following is a 407-amino-acid chain: MAVKTLEDLLNDGDREIAGRGVLVRSDLNVPLDDNGAITDPGRIIASVPTLEALAEAGAKVIVTAHLGRPKGGPDPKYSLKPVAAALSEKLGRHVQLAGDVVGTDALARAEGLTDGDVLLLENIRFDPRETSKDDGERRKLAEALVELVGDDGAFVSDGFGVVHRKQASVYDIATLLPHYAGTLVAAEVKVLEQLTSSTDRPYAVVLGGSKVSDKLAVIESLAKKADSLVIGGGMCFTFLASQGVSVGKSLVQPEMIDTCRELLDTYGDVIHLPVDIVVAPEFSADAEPETVAADRIPEDKMGLDIGPESVKRFTNLLSNARTVFWNGPMGVFEFPAFAAGTKGVAEAIIGATAKGAFSVVGGGDSAAAVRQLGLAEDGFSHISTGGGASLEYLEGKELPGIQVLES.

Substrate is bound by residues 27–29 (DLN), R43, 66–69 (HLGR), R125, and R165. ATP contacts are provided by residues K215, G303, E334, and 363–366 (GGDS).

The protein belongs to the phosphoglycerate kinase family. As to quaternary structure, monomer.

It localises to the cytoplasm. It catalyses the reaction (2R)-3-phosphoglycerate + ATP = (2R)-3-phospho-glyceroyl phosphate + ADP. Its pathway is carbohydrate degradation; glycolysis; pyruvate from D-glyceraldehyde 3-phosphate: step 2/5. The protein is Phosphoglycerate kinase of Mycobacterium sp. (strain JLS).